The primary structure comprises 144 residues: Large ribosomal subunit protein uL13 (144 aa).

It belongs to the universal ribosomal protein uL13 family. Part of the 50S ribosomal subunit.

Functionally, this protein is one of the early assembly proteins of the 50S ribosomal subunit, although it is not seen to bind rRNA by itself. It is important during the early stages of 50S assembly. The protein is Large ribosomal subunit protein uL13 of Heliobacterium modesticaldum (strain ATCC 51547 / Ice1).